Consider the following 248-residue polypeptide: Ureidoacrylate amidohydrolase RutB (248 aa).

The Proton acceptor role is filled by aspartate 41. The active site involves lysine 150. Catalysis depends on cysteine 183, which acts as the Nucleophile.

Belongs to the isochorismatase family. RutB subfamily.

It catalyses the reaction (Z)-3-ureidoacrylate + H2O + H(+) = (Z)-3-aminoacrylate + NH4(+) + CO2. The enzyme catalyses (Z)-3-ureidoacrylate + H2O = (Z)-3-aminoacrylate + carbamate + H(+). It carries out the reaction (Z)-2-methylureidoacrylate + H2O + H(+) = (Z)-2-methylaminoacrylate + NH4(+) + CO2. Its function is as follows. Hydrolyzes ureidoacrylate to form aminoacrylate and carbamate. The carbamate hydrolyzes spontaneously, thereby releasing one of the nitrogen atoms of the pyrimidine ring as ammonia and one of its carbon atoms as CO2. The chain is Ureidoacrylate amidohydrolase RutB from Methylorubrum extorquens (strain CM4 / NCIMB 13688) (Methylobacterium extorquens).